A 439-amino-acid chain; its full sequence is Xylose isomerase (439 aa).

Residues H101 and D104 contribute to the active site. Mg(2+) contacts are provided by E232, E268, H271, D296, D307, D309, and D339.

The protein belongs to the xylose isomerase family. As to quaternary structure, homotetramer. Mg(2+) is required as a cofactor.

The protein resides in the cytoplasm. The catalysed reaction is alpha-D-xylose = alpha-D-xylulofuranose. This chain is Xylose isomerase, found in Photobacterium profundum (strain SS9).